A 1132-amino-acid polypeptide reads, in one-letter code: MGMACLTMTEMEGTSTSPAHQNGDIPGNANSVKQTEPVLQVYLYHSLGQAEGDYLKFPNGEYVAEEICVAASKACGITPVYHNMFALMSETERIWYPPNHVFHIDESTRHNILYRIRFYFPHWYCSGSNRTYRYGVSRGAEAPLLDDFVMSYLFAQWRHDFVHGWIKVPVTHETQEECLGMAVLDMMRIAKEKDQTPLAVYNSISYKTFLPKCVRAKIQDYHILTRKRIRYRFRRFIQQFSQCKATARNLKLKYLINLETLQSAFYTEQFEVKESARGPSGEEIFATIIITGNGGIQWSRGKHKESETLTEQDLQLYCDFPDIIDVSIKQANQECSTESRVVTVHKQDGKVLEIELSSLKEALSFVSLIDGYYRLTADAHHYLCKEVAPPAVLENIHSNCHGPISMDFAISKLKKAGNQTGLYVLRCSPKDFNKYFLTFAVERENVIEYKHCLITKNENGEYNLSGTKRNFSSLKDLLNCYQMETVRSDSIIFQFTKCCPPKPKDKSNLLVFRTNGVSDVQLSPTLQRHNNVNQMVFHKIRNEDLIFNESLGQGTFTKIFKGVRREVGDYGQLHETEVLLKVLDKAHRNYSESFFEAASMMSQLSHKHLVLNYGVCVCGEENILVQEFVKFGSLDTYLKKNKNSINILWKLGVAKQLAWAMHFLEEKSLIHGNVCAKNILLIREEDRKTGNPPFIKLSDPGISITVLPKDILQERIPWVPPECIENPKNLTLATDKWSFGTTLWEICSGGDKPLSALDSQRKLQFYEDKHQLPAPKWTELANLINTCMDYEPDFRPAFRAVIRDLNSLFTPDYELLTENDMLPNMRIGALGFSGAFEDRDPTQFEERHLKFLQQLGKGNFGSVEMCRYDPLQDNTGEVVAVKKLQHSTEEHLRDFEREIEILKSLQHDNIVKYKGVCYSAGRRNLRLIMEYLPYGSLRDYLQKHKERIDHKKLLQYTSQICKGMEYLGTKRYIHRDLATRNILVENENRVKIGDFGLTKVLPQDKEYYKVKEPGESPIFWYAPESLTESKFSVASDVWSFGVVLYELFTYIEKSKSPPVEFMRMIGNDKQGQMIVFHLIELLKNNGRLPRPEGCPDEIYVIMTECWNNNVNQRPSFRDLSLRVDQIRDSMAA.

The tract at residues 1-239 is interaction with cytokine/interferon/growth hormone receptors; it reads MGMACLTMTE…RYRFRRFIQQ (239 aa). The FERM domain occupies 37–380; sequence PVLQVYLYHS…GYYRLTADAH (344 aa). Tyr119 is subject to Phosphotyrosine; by autocatalysis. Phosphotyrosine occurs at positions 372 and 373. The SH2; atypical domain maps to 401-482; it reads HGPISMDFAI…SLKDLLNCYQ (82 aa). At Ser523 the chain carries Phosphoserine. In terms of domain architecture, Protein kinase 1 spans 545–809; it reads LIFNESLGQG…AVIRDLNSLF (265 aa). Tyr570 and Tyr813 each carry phosphotyrosine. The Protein kinase 2 domain maps to 849 to 1126; it reads LKFLQQLGKG…RDLSLRVDQI (278 aa). 855–863 is a binding site for ATP; the sequence is LGKGNFGSV. Tyr868 carries the post-translational modification Phosphotyrosine; by autocatalysis. Residue Lys882 coordinates ATP. Phosphotyrosine; by autocatalysis is present on residues Tyr966 and Tyr972. Residue Asp976 is the Proton acceptor of the active site. Residues Tyr1007 and Tyr1008 each carry the phosphotyrosine; by autocatalysis modification.

It belongs to the protein kinase superfamily. Tyr protein kinase family. JAK subfamily. In terms of assembly, interacts with IL23R, SKB1 and STAM2. Interacts with EPOR. Interacts with LYN. Interacts with SIRPA. Interacts with SH2B1. Interacts with TEC. Interacts with IFNGR2 (via intracellular domain). Interacts with LEPR (Isoform B). Interacts with HSP90AB1; promotes functional activation in a heat shock-dependent manner. Interacts with STRA6. Interacts with ASB2; the interaction targets JAK2 for Notch-induced proteasomal degradation. Mg(2+) is required as a cofactor. In terms of processing, autophosphorylated, leading to regulate its activity. Leptin promotes phosphorylation on tyrosine residues, including phosphorylation on Tyr-813. Autophosphorylation on Tyr-119 in response to EPO down-regulates its kinase activity. Autophosphorylation on Tyr-868, Tyr-966 and Tyr-972 in response to growth hormone (GH) are required for maximal kinase activity. Also phosphorylated by TEC. Phosphorylated on tyrosine residues in response to interferon gamma signaling. Phosphorylated on tyrosine residues in response to a signaling cascade that is activated by increased cellular retinol. Post-translationally, undergoes Notch-induced ubiquitination and subsequent proteasomal degradation which is mediated by ASB1 or ASB2, the substrate-recognition components of probable ECS E3 ubiquitin-protein ligase complexes. In terms of tissue distribution, ubiquitously expressed throughout most tissues.

It is found in the endomembrane system. The protein localises to the cytoplasm. It localises to the nucleus. It catalyses the reaction L-tyrosyl-[protein] + ATP = O-phospho-L-tyrosyl-[protein] + ADP + H(+). With respect to regulation, regulated by autophosphorylation, can both activate or decrease activity. Heme regulates its activity by enhancing the phosphorylation on Tyr-1007 and Tyr-1008. Non-receptor tyrosine kinase involved in various processes such as cell growth, development, differentiation or histone modifications. Mediates essential signaling events in both innate and adaptive immunity. In the cytoplasm, plays a pivotal role in signal transduction via its association with type I receptors such as growth hormone (GHR), prolactin (PRLR), leptin (LEPR), erythropoietin (EPOR), thrombopoietin (THPO); or type II receptors including IFN-alpha, IFN-beta, IFN-gamma and multiple interleukins. Following ligand-binding to cell surface receptors, phosphorylates specific tyrosine residues on the cytoplasmic tails of the receptor, creating docking sites for STATs proteins. Subsequently, phosphorylates the STATs proteins once they are recruited to the receptor. Phosphorylated STATs then form homodimer or heterodimers and translocate to the nucleus to activate gene transcription. For example, cell stimulation with erythropoietin (EPO) during erythropoiesis leads to JAK2 autophosphorylation, activation, and its association with erythropoietin receptor (EPOR) that becomes phosphorylated in its cytoplasmic domain. Then, STAT5 (STAT5A or STAT5B) is recruited, phosphorylated and activated by JAK2. Once activated, dimerized STAT5 translocates into the nucleus and promotes the transcription of several essential genes involved in the modulation of erythropoiesis. Part of a signaling cascade that is activated by increased cellular retinol and that leads to the activation of STAT5 (STAT5A or STAT5B). In addition, JAK2 mediates angiotensin-2-induced ARHGEF1 phosphorylation. Plays a role in cell cycle by phosphorylating CDKN1B. Cooperates with TEC through reciprocal phosphorylation to mediate cytokine-driven activation of FOS transcription. In the nucleus, plays a key role in chromatin by specifically mediating phosphorylation of 'Tyr-41' of histone H3 (H3Y41ph), a specific tag that promotes exclusion of CBX5 (HP1 alpha) from chromatin. Up-regulates the potassium voltage-gated channel activity of KCNA3. The polypeptide is Tyrosine-protein kinase JAK2 (Rattus norvegicus (Rat)).